Reading from the N-terminus, the 887-residue chain is Pyruvate dehydrogenase E1 component (887 aa).

Mg(2+)-binding residues include D231, N261, and Q263. N6-acetyllysine is present on K716.

As to quaternary structure, homodimer. Part of the PDH complex, consisting of multiple copies of pyruvate dehydrogenase (E1), dihydrolipoamide acetyltransferase (E2) and lipoamide dehydrogenase (E3). It depends on Mg(2+) as a cofactor. Requires thiamine diphosphate as cofactor.

The enzyme catalyses N(6)-[(R)-lipoyl]-L-lysyl-[protein] + pyruvate + H(+) = N(6)-[(R)-S(8)-acetyldihydrolipoyl]-L-lysyl-[protein] + CO2. In terms of biological role, component of the pyruvate dehydrogenase (PDH) complex, that catalyzes the overall conversion of pyruvate to acetyl-CoA and CO(2). In Escherichia coli O157:H7, this protein is Pyruvate dehydrogenase E1 component (aceE).